The sequence spans 280 residues: uncharacterized protein (280 aa).

Residues 1-10 (MSSSIKKLKK) are compositionally biased toward basic residues. The disordered stretch occupies residues 1 to 45 (MSSSIKKLKKDTKDTDKTPSKKIYQETHNSEDSEDSEDSDNENNT). Positions 11-31 (DTKDTDKTPSKKIYQETHNSE) are enriched in basic and acidic residues. A compositionally biased stretch (acidic residues) spans 32 to 41 (DSEDSEDSDN).

This is an uncharacterized protein from Acanthamoeba polyphaga mimivirus (APMV).